Reading from the N-terminus, the 285-residue chain is Complement C1q tumor necrosis factor-related protein 2 (285 aa).

The N-terminal stretch at 1-15 (MIPWVLLACALPCAA) is a signal peptide. Residues 33–144 (QLVCSLPGPQ…PGLPGPCSCG (112 aa)) form a disordered region. Positions 40–141 (GPQGPPGPPG…KGEPGLPGPC (102 aa)) constitute a Collagen-like domain. Residues 41–51 (PQGPPGPPGAP) show a composition bias toward pro residues. Positions 53 to 65 (PSGMMGRMGFPGK) are enriched in low complexity. A compositionally biased stretch (basic and acidic residues) spans 66-78 (DGQDGHDGDRGDS). Low complexity predominate over residues 84–120 (PGRTGNRGKPGPKGKAGAIGRAGPRGPKGVNGTPGKH). The 137-residue stretch at 145 to 281 (SGHTKSAFSV…GFLIYADQDD (137 aa)) folds into the C1q domain.

May interact with ERFE. As to expression, expressed in adipose tissue.

The protein resides in the secreted. Involved in the regulation of lipid metabolism in adipose tissue and liver. This chain is Complement C1q tumor necrosis factor-related protein 2 (C1QTNF2), found in Homo sapiens (Human).